The primary structure comprises 158 residues: Cytochrome c-type biogenesis protein CcmE (158 aa).

Over residues 1–11 (MTRPDSGSSPA) the composition is skewed to polar residues. Residues 1–20 (MTRPDSGSSPAPLSEARRRK) form a disordered region. Over 1 to 23 (MTRPDSGSSPAPLSEARRRKRNP) the chain is Cytoplasmic. Residues 24-44 (LPTVLGITALLGLAGFIAFGN) form a helical; Signal-anchor for type II membrane protein membrane-spanning segment. Topologically, residues 45 to 158 (LNKSLEYFVT…ELRDLLEQSE (114 aa)) are extracellular. 2 residues coordinate heme: His-137 and Tyr-141.

It belongs to the CcmE/CycJ family.

The protein localises to the cell membrane. Functionally, heme chaperone required for the biogenesis of c-type cytochromes. Transiently binds heme delivered by CcmC and transfers the heme to apo-cytochromes in a process facilitated by CcmF and CcmH. In Deinococcus deserti (strain DSM 17065 / CIP 109153 / LMG 22923 / VCD115), this protein is Cytochrome c-type biogenesis protein CcmE.